The primary structure comprises 214 residues: Thiamine-phosphate synthase (214 aa).

Residues 38–42 (QLREK) and asparagine 70 each bind 4-amino-2-methyl-5-(diphosphooxymethyl)pyrimidine. Positions 71 and 90 each coordinate Mg(2+). 2 residues coordinate 4-amino-2-methyl-5-(diphosphooxymethyl)pyrimidine: serine 109 and lysine 138. Glycine 165 is a binding site for 2-[(2R,5Z)-2-carboxy-4-methylthiazol-5(2H)-ylidene]ethyl phosphate.

The protein belongs to the thiamine-phosphate synthase family. Mg(2+) is required as a cofactor.

The catalysed reaction is 2-[(2R,5Z)-2-carboxy-4-methylthiazol-5(2H)-ylidene]ethyl phosphate + 4-amino-2-methyl-5-(diphosphooxymethyl)pyrimidine + 2 H(+) = thiamine phosphate + CO2 + diphosphate. The enzyme catalyses 2-(2-carboxy-4-methylthiazol-5-yl)ethyl phosphate + 4-amino-2-methyl-5-(diphosphooxymethyl)pyrimidine + 2 H(+) = thiamine phosphate + CO2 + diphosphate. It carries out the reaction 4-methyl-5-(2-phosphooxyethyl)-thiazole + 4-amino-2-methyl-5-(diphosphooxymethyl)pyrimidine + H(+) = thiamine phosphate + diphosphate. Its pathway is cofactor biosynthesis; thiamine diphosphate biosynthesis; thiamine phosphate from 4-amino-2-methyl-5-diphosphomethylpyrimidine and 4-methyl-5-(2-phosphoethyl)-thiazole: step 1/1. Functionally, condenses 4-methyl-5-(beta-hydroxyethyl)thiazole monophosphate (THZ-P) and 2-methyl-4-amino-5-hydroxymethyl pyrimidine pyrophosphate (HMP-PP) to form thiamine monophosphate (TMP). The sequence is that of Thiamine-phosphate synthase from Caldanaerobacter subterraneus subsp. tengcongensis (strain DSM 15242 / JCM 11007 / NBRC 100824 / MB4) (Thermoanaerobacter tengcongensis).